The sequence spans 362 residues: Atypical chemokine receptor 3 (362 aa).

The Extracellular segment spans residues 1-47 (MDVHLFDYAEPGNYSDINWPCNSSDCIVVDTVQCPTMPNKNVLLYTL). N-linked (GlcNAc...) asparagine glycosylation is found at Asn13 and Asn22. The chain crosses the membrane as a helical span at residues 48–68 (SFIYIFIFVIGMIANSVVVWV). Residues 69–81 (NIQAKTTGYDTHC) are Cytoplasmic-facing. Residues 82–102 (YILNLAIADLWVVITIPVWVV) traverse the membrane as a helical segment. Topologically, residues 103 to 118 (SLVQHNQWPMGELTCK) are extracellular. Cys117 and Cys196 form a disulfide bridge. A helical membrane pass occupies residues 119–139 (ITHLIFSINLFGSIFFLACMS). Residues 140–162 (VDRYLSITYFTGTSSYKKKMVRR) are Cytoplasmic-facing. The chain crosses the membrane as a helical span at residues 163–183 (VVCILVWLLAFFVSLPDTYYL). Over 184–213 (KTVTSASNNETYCRSFYPEHSIKEWLIGME) the chain is Extracellular. The chain crosses the membrane as a helical span at residues 214 to 234 (LVSVILGFAVPFTIIAIFYFL). The Cytoplasmic portion of the chain corresponds to 235-252 (LARAMSASGDQEKHSSRK). A helical membrane pass occupies residues 253 to 273 (IIFSYVVVFLVCWLPYHFVVL). Residues 274 to 296 (LDIFSILHYIPFTCQLENVLFTA) lie on the Extracellular side of the membrane. A helical transmembrane segment spans residues 297 to 319 (LHVTQCLSLVHCCVNPVLYSFIN). At 320-362 (RNYRYELMKAFIFKYSAKTGLTKLIDASRVSETEYSALEQNTK) the chain is on the cytoplasmic side. The tract at residues 324-362 (YELMKAFIFKYSAKTGLTKLIDASRVSETEYSALEQNTK) is C-terminal cytoplasmic tail. 3 positions are modified to phosphoserine: Ser347, Ser350, and Ser355.

It belongs to the G-protein coupled receptor 1 family. Atypical chemokine receptor subfamily. In terms of assembly, homodimer. Can form heterodimers with CXCR4; heterodimerization may regulate CXCR4 signaling activity. Interacts with ARRB1 and ARRB2. Post-translationally, the Ser/Thr residues in the C-terminal cytoplasmic tail may be phosphorylated. In terms of processing, ubiquitinated at the Lys residues in its C-terminal cytoplasmic tail and is essential for correct trafficking from and to the cell membrane. Deubiquitinated by CXCL12-stimulation in a reversible manner. As to expression, not detected in blood, liver, lung and heart, but high expression detected in several tumor cell lines (at protein level). Expressed in heart, spleen, kidney, lung, ovary, brain, testis, astrocytes, neutrophils and B-lymphocytes.

The protein localises to the cell membrane. It is found in the early endosome. The protein resides in the recycling endosome. In terms of biological role, atypical chemokine receptor that controls chemokine levels and localization via high-affinity chemokine binding that is uncoupled from classic ligand-driven signal transduction cascades, resulting instead in chemokine sequestration, degradation, or transcytosis. Also known as interceptor (internalizing receptor) or chemokine-scavenging receptor or chemokine decoy receptor. Acts as a receptor for chemokines CXCL11 and CXCL12/SDF1. Chemokine binding does not activate G-protein-mediated signal transduction but instead induces beta-arrestin recruitment, leading to ligand internalization and activation of MAPK signaling pathway. Required for regulation of CXCR4 protein levels in migrating interneurons, thereby adapting their chemokine responsiveness. In glioma cells, transduces signals via MEK/ERK pathway, mediating resistance to apoptosis. Promotes cell growth and survival. Not involved in cell migration, adhesion or proliferation of normal hematopoietic progenitors but activated by CXCL11 in malignant hemapoietic cells, leading to phosphorylation of ERK1/2 (MAPK3/MAPK1) and enhanced cell adhesion and migration. Plays a regulatory role in CXCR4-mediated activation of cell surface integrins by CXCL12. Required for heart valve development. Regulates axon guidance in the oculomotor system through the regulation of CXCL12 levels. This chain is Atypical chemokine receptor 3, found in Mus musculus (Mouse).